The sequence spans 520 residues: 2,3-bisphosphoglycerate-independent phosphoglycerate mutase (520 aa).

Mn(2+) is bound by residues Asp-13 and Ser-63. The active-site Phosphoserine intermediate is the Ser-63. Residues His-124, 154–155 (RD), Arg-192, Arg-198, 268–271 (RADR), and Lys-342 contribute to the substrate site. The Mn(2+) site is built by Asp-409, His-413, Asp-450, His-451, and His-469.

It belongs to the BPG-independent phosphoglycerate mutase family. In terms of assembly, monomer. It depends on Mn(2+) as a cofactor.

It catalyses the reaction (2R)-2-phosphoglycerate = (2R)-3-phosphoglycerate. The protein operates within carbohydrate degradation; glycolysis; pyruvate from D-glyceraldehyde 3-phosphate: step 3/5. Functionally, catalyzes the interconversion of 2-phosphoglycerate and 3-phosphoglycerate. The protein is 2,3-bisphosphoglycerate-independent phosphoglycerate mutase of Colwellia psychrerythraea (strain 34H / ATCC BAA-681) (Vibrio psychroerythus).